The chain runs to 110 residues: uncharacterized protein (110 aa).

Residues 1–16 (MSVKLKYDKIDQRNGD) show a composition bias toward basic and acidic residues. 2 disordered regions span residues 1–29 (MSVK…GNGN) and 73–100 (IKQQ…ESPN). Low complexity predominate over residues 20–29 (GNHNNCGNGN).

This is an uncharacterized protein from Dictyostelium discoideum (Social amoeba).